Here is a 1910-residue protein sequence, read N- to C-terminus: Endoribonuclease dcr-1 (1910 aa).

Residues 20 to 201 form the Helicase ATP-binding domain; it reads LLDKATKKNT…KLMEQLKKLE (182 aa). 33 to 40 provides a ligand contact to ATP; that stretch reads LGTGSGKT. A DEAH box motif is present at residues 145–148; the sequence is DECH. Positions 371–542 constitute a Helicase C-terminal domain; that stretch reads EFQKERMKLE…TVNNPIEDDS (172 aa). A Dicer dsRNA-binding fold domain is found at 571–667; the sequence is AIALINRYCS…LPKGRESIAK (97 aa). One can recognise a PAZ domain in the interval 845-1003; sequence YVSEVVANME…LVPELMDIHP (159 aa). Disordered regions lie at residues 951 to 988, 1227 to 1248, and 1272 to 1309; these read RIQN…VPHS, TASS…KQLT, and LEMS…PTNF. Polar residues-rich tracts occupy residues 970-988 and 1227-1245; these read IPQA…VPHS and TASS…SPPK. Positions 1245 to 1280 form a coiled coil; sequence KQLTKEEEQFKKLQNDLLKQAKERLEALEMSEDMEK. Positions 1272–1286 are enriched in basic and acidic residues; the sequence is LEMSEDMEKPRRLED. Positions 1288–1304 are enriched in acidic residues; that stretch reads VNLEDYGDDQENQEDEN. 2 consecutive RNase III domains span residues 1381–1589 and 1643–1805; these read VSHI…LTLG and FTQL…LDSG. Mg(2+) is bound by residues Glu1682, Asp1791, and Glu1794. The region spanning 1833–1896 is the DRBM domain; it reads SPIRELMEFE…AKRALKYLHQ (64 aa).

Belongs to the helicase family. Dicer subfamily. In terms of assembly, component of the ERI/DICER complex at least composed of dcr-1, rrf-3 and eri-1. Interacts with pir-1. The cofactor is Mg(2+). Requires Mn(2+) as cofactor.

Functionally, component of the ERI/DICER complex which is involved in processing amplified double-stranded RNA (dsRNA) intermediates during small-RNA-mediated gene-silencing or RNA interference (RNAi). Involved in cleaving dsRNA in the RNAi pathway. It produces 21 to 23 bp dsRNAs (siRNAs) which target the selective destruction of homologous RNAs. Seems to process the precursor of the small temporal RNA let-7 which is involved in developmental timing. Required for avoidance behavior induced by small RNAs derived from pathogenic bacteria such as P.aeruginosa. Involved in innate immunity through its role in small RNA processing. Its function is as follows. tDCR-1 acts as a deoxyribonuclease (DNase) initiating DNA fragmentation during apoptosis, upstream of nucleases cps-6, crn-2 and nuc-1. This Caenorhabditis elegans protein is Endoribonuclease dcr-1.